The following is a 352-amino-acid chain: Endophilin-A1 (352 aa).

The interval 1-21 (MSVAGLKKQFHKATQKVSEKV) is membrane-binding amphipathic helix. The segment at 1–27 (MSVAGLKKQFHKATQKVSEKVGGAEGT) is disordered. The interval 1 to 125 (MSVAGLKKQF…EVGEAMRELS (125 aa)) is binds and tubulates liposomes. In terms of domain architecture, BAR spans 18-249 (SEKVGGAEGT…LEERIRQASS (232 aa)). Residues 60–87 (PNPASRAKLSMINTMSKIRGQEKGPGYP) are required for dimerization upon membrane association. The stretch at 181-248 (EELRQALEKF…RLEERIRQAS (68 aa)) forms a coiled coil. A Phosphoserine modification is found at serine 262. The disordered stretch occupies residues 264 to 289 (EFATGDSTQPNGGLSHTGTPKPPGVQ). The span at 268-281 (GDSTQPNGGLSHTG) shows a compositional bias: polar residues. An SH3 domain is found at 290-349 (MDQPCCRALYDFEPENEGELGFKEGDIITLTNQIDENWYEGMLHGQSGFFPINYVEILVA). Tyrosine 299 carries the phosphotyrosine modification.

Belongs to the endophilin family. As to quaternary structure, monomer; in cytoplasm. Homodimer; when associated with membranes. Interacts with SYNJ1. Interacts with DNM1. Interacts with MAP4K3; the interaction appears to regulate MAP4K3-mediated JNK activation. Interacts with OPHN1. Interacts with PDCD6IP. Interacts with BIN2. Interacts with ATXN2. Interacts with ADAM9 and ADAM15 cytoplasmic tails. Interacts with TMEM108. Interacts with ADGRB2.

The protein localises to the cytoplasm. It is found in the membrane. Its subcellular location is the early endosome. The protein resides in the presynapse. Its function is as follows. Implicated in synaptic vesicle endocytosis. May recruit other proteins to membranes with high curvature. Required for BDNF-dependent dendrite outgrowth. Cooperates with SH3GL2 to mediate BDNF-NTRK2 early endocytic trafficking and signaling from early endosomes. In Mus musculus (Mouse), this protein is Endophilin-A1 (Sh3gl2).